Consider the following 372-residue polypeptide: Secreted beta-glucosidase SIM1 (372 aa).

The signal sequence occupies residues 1–15 (MKYLTLLTVLSTALA). Positions 51–85 (VTENASSGASSGETAETIQTRSSSDVSSSSDSNPV) are disordered. Low complexity predominate over residues 52 to 85 (TENASSGASSGETAETIQTRSSSDVSSSSDSNPV). 2 N-linked (GlcNAc...) asparagine glycosylation sites follow: N54 and N351.

This sequence belongs to the SUN family.

It localises to the secreted. The protein localises to the cell wall. Its function is as follows. Cell surface beta-glucosidase involved in cell wall maintenance and cytokinesis. Plays a role redundant to SUN41. This Candida albicans (strain SC5314 / ATCC MYA-2876) (Yeast) protein is Secreted beta-glucosidase SIM1 (SIM1).